A 579-amino-acid polypeptide reads, in one-letter code: Glutamine--tRNA ligase (579 aa).

The 'HIGH' region motif lies at 41-51; it reads PEPNGYLHIGH. ATP-binding positions include 42–44 and 48–54; these read EPN and HIGHAKA. L-glutamine contacts are provided by D74 and Y218. ATP contacts are provided by residues T237, 285-286, and 293-295; these read RL and MSK. The 'KMSKS' region signature appears at 292-296; the sequence is VMSKR.

The protein belongs to the class-I aminoacyl-tRNA synthetase family. In terms of assembly, monomer.

It localises to the cytoplasm. It catalyses the reaction tRNA(Gln) + L-glutamine + ATP = L-glutaminyl-tRNA(Gln) + AMP + diphosphate. This Xanthomonas campestris pv. campestris (strain 8004) protein is Glutamine--tRNA ligase.